A 196-amino-acid polypeptide reads, in one-letter code: Heat shock protein beta-8 (196 aa).

The disordered stretch occupies residues Met-1–Phe-35. 2 positions are modified to phosphoserine: Ser-24 and Ser-57. Phosphothreonine is present on Thr-63. Asymmetric dimethylarginine occurs at positions 71 and 78. The region spanning Thr-74–Glu-185 is the sHSP domain. Ser-87 is subject to Phosphoserine. Residues Pro-176–Thr-196 form a disordered region. Over residues Gly-178–Thr-196 the composition is skewed to polar residues.

The protein belongs to the small heat shock protein (HSP20) family. Monomer. Forms a ternary complex with BAG3 and HSPA1A. Component of the chaperone-assisted selective autophagy (CASA) complex consisting of BAG3, HSPA8/HSC70, HSPB8 and STUB1/CHIP. Interacts with HSPB1. Interacts with DNAJB6. Interacts with BAG3. Post-translationally, phosphorylated.

The protein resides in the cytoplasm. It localises to the nucleus. In terms of biological role, involved in the chaperone-assisted selective autophagy (CASA), a crucial process for protein quality control, particularly in mechanical strained cells and tissues such as muscle. Displays temperature-dependent chaperone activity. In Canis lupus familiaris (Dog), this protein is Heat shock protein beta-8 (HSPB8).